Reading from the N-terminus, the 66-residue chain is DNA gyrase inhibitor YacG (66 aa).

Positions 10, 13, 29, and 33 each coordinate Zn(2+).

Belongs to the DNA gyrase inhibitor YacG family. In terms of assembly, interacts with GyrB. Zn(2+) is required as a cofactor.

Its function is as follows. Inhibits all the catalytic activities of DNA gyrase by preventing its interaction with DNA. Acts by binding directly to the C-terminal domain of GyrB, which probably disrupts DNA binding by the gyrase. The polypeptide is DNA gyrase inhibitor YacG (Edwardsiella ictaluri (strain 93-146)).